Here is a 171-residue protein sequence, read N- to C-terminus: Endoribonuclease ToxN (171 aa).

It belongs to the ToxN/AbiQ toxin family. One ToxN monomer binds to a 36-nt-long single repeat of the ToxI RNA; this complex forms a triangular heterohexameric complex with ToxN connected by the ToxI RNA to another toxin molecule. The ToxI repeat forms a pseudoknot which occludes the toxin active site. Interaction of ToxI with ToxN partially inhibits the latter's endoribonuclease activity in vitro. The complex self-assembles in vitro with either full-length or processed single repeats; during the process the precursor is processed.

Toxic component of a type III toxin-antitoxin (TA) system. An endoribonuclease which is active independently of the ribosome, cleaving between the second and third A of AAA(U/G) sequences, although not all occurrences of this tetranucleotide are cleaved. Digests many mRNA species, including its own transcript and its cognate antitoxin RNA ToxI. ToxI has 5.5 nearly identical 36 nucleotide-long repeats (a single repeat neutralizes the toxin in vivo); a single repeat folds into a pseudoknot which binds the toxin. The ToxI precursor RNA is a preferential target in vivo and is progressively degraded to single repeat lengths as ToxN-ToxI complex self-assembly occurs. In vivo expression of ToxI antitoxin inhibits endonuclease activity of ToxN. The toxin alone inhibits growth when expressed in E.coli without causing cell lysis; this bacteriostatic effect is neutralized by cognate RNA antitoxin ToxI. Non-cognate antitoxin RNA from B.thuringiensis does not inhibit this toxin. The RNA antitoxin is less stable than the proteinaceous toxin; synthesis of ToxI in the absence of new ToxN synthesis restores growth and also detectable accumulation of the ToxN protein. Negatively regulates its own operon in complex with ToxI. The toxin-antitoxin system functions in plasmid maintenance (a plasmid addiction system). Its function is as follows. The TA system protects P.atrosepticum strain 1043 against phage phiM1 and phiA2, E.coli against some but not all coliphages and S.marcescens against some bacteriophages, causing an abortive infection (Abi phenotype). Also protects P.atrosepticum strain 1043 against phage phiTE; phage that escape Abi and grow in this bacterium have evolved a pseudo-ToxI RNA by expanding a pre-existing sequence similar to the bona fide ToxI repeats. The chain is Endoribonuclease ToxN from Pectobacterium atrosepticum (Erwinia carotovora subsp. atroseptica).